The sequence spans 393 residues: Elongation factor Tu (393 aa).

The 194-residue stretch at 10–203 folds into the tr-type G domain; it reads KPHVNIGTIG…AVDNYIPTPV (194 aa). Residues 19–26 form a G1 region; that stretch reads GHVDHGKT. 19–26 is a binding site for GTP; the sequence is GHVDHGKT. Thr-26 is a Mg(2+) binding site. The tract at residues 60–64 is G2; it reads GITIS. The interval 81–84 is G3; sequence DCPG. Residues 81–85 and 136–139 each bind GTP; these read DCPGH and NKVD. Residues 136 to 139 are G4; the sequence is NKVD. Residues 173–175 are G5; sequence SAL.

This sequence belongs to the TRAFAC class translation factor GTPase superfamily. Classic translation factor GTPase family. EF-Tu/EF-1A subfamily. In terms of assembly, monomer.

The protein resides in the cytoplasm. It carries out the reaction GTP + H2O = GDP + phosphate + H(+). GTP hydrolase that promotes the GTP-dependent binding of aminoacyl-tRNA to the A-site of ribosomes during protein biosynthesis. The chain is Elongation factor Tu from Chloroherpeton thalassium (strain ATCC 35110 / GB-78).